The following is a 491-amino-acid chain: Glutamyl-tRNA(Gln) amidotransferase subunit A (491 aa).

Residues Lys80 and Ser155 each act as charge relay system in the active site. Ser179 acts as the Acyl-ester intermediate in catalysis.

Belongs to the amidase family. GatA subfamily. In terms of assembly, heterotrimer of A, B and C subunits.

It carries out the reaction L-glutamyl-tRNA(Gln) + L-glutamine + ATP + H2O = L-glutaminyl-tRNA(Gln) + L-glutamate + ADP + phosphate + H(+). In terms of biological role, allows the formation of correctly charged Gln-tRNA(Gln) through the transamidation of misacylated Glu-tRNA(Gln) in organisms which lack glutaminyl-tRNA synthetase. The reaction takes place in the presence of glutamine and ATP through an activated gamma-phospho-Glu-tRNA(Gln). In Salinispora arenicola (strain CNS-205), this protein is Glutamyl-tRNA(Gln) amidotransferase subunit A.